Here is a 1251-residue protein sequence, read N- to C-terminus: Myosin-1 (1251 aa).

The interval 1–37 (MGQSKRPFKNKEEKKSRGFGRSRHDDAGAGGRPQVKK) is disordered. Residues 9–27 (KNKEEKKSRGFGRSRHDDA) show a composition bias toward basic and acidic residues. Residues 48-727 (IGVSDLTLLS…TLFALEHMRD (680 aa)) form the Myosin motor domain. Residue 141 to 148 (GESGAGKT) participates in ATP binding. Position 369 is a phosphoserine (S369). The tract at residues 416-498 (TIGILDIYGF…PGVFAALNDA (83 aa)) is actin-binding. 2 consecutive IQ domains span residues 731-751 (HNMA…RTEC) and 752-777 (AIRI…QGHK). Residues 785–980 (RRRYSLVGSR…PGEPANSVSK (196 aa)) enclose the TH1 domain. 2 disordered regions span residues 958–1093 (RDDV…SNEL) and 1135–1227 (AKTP…ASIA). A compositionally biased stretch (low complexity) spans 1040-1052 (VAQSVTAVAAAHA). A compositionally biased stretch (pro residues) spans 1061 to 1073 (RPPPPPPPTQPPA). The 62-residue stretch at 1074 to 1135 (PKKDTAKALY…PEAYLEPIVA (62 aa)) folds into the SH3 domain. Over residues 1139–1148 (SLPPPPPSLP) the composition is skewed to pro residues. Polar residues-rich tracts occupy residues 1150-1161 (QSKSAVSNTLPN) and 1216-1225 (ATPSSLSNAS).

It belongs to the TRAFAC class myosin-kinesin ATPase superfamily. Myosin family. Post-translationally, phosphorylation of the TEDS site (Ser-369) is required for the polarization of the actin cytoskeleton. Phosphorylation probably activates the myosin-I ATPase activity.

It localises to the cytoplasm. The protein localises to the cytoskeleton. The protein resides in the actin patch. In terms of biological role, type-I myosin implicated in the organization of the actin cytoskeleton. Required for proper actin cytoskeleton polarization. At the cell cortex, assembles in patch-like structures together with proteins from the actin-polymerizing machinery and promotes actin assembly. Functions as actin nucleation-promoting factor (NPF) for the Arp2/3 complex. This Coccidioides immitis (strain RS) (Valley fever fungus) protein is Myosin-1 (MYO1).